Reading from the N-terminus, the 660-residue chain is Bifunctional polymyxin resistance protein ArnA (660 aa).

Residues 1–304 (MKTVVFAYHD…TLGLVQGSRL (304 aa)) form a formyltransferase ArnAFT region. 86-88 (HLI) is a (6R)-10-formyltetrahydrofolate binding site. H104 serves as the catalytic Proton donor; for formyltransferase activity. Residues R114 and 136–140 (VKRAD) contribute to the (6R)-10-formyltetrahydrofolate site. A dehydrogenase ArnADH region spans residues 314 to 660 (RRTRVLILGV…RTVDLTDKPS (347 aa)). Residues D347 and 368 to 369 (DI) contribute to the NAD(+) site. UDP-alpha-D-glucuronate contacts are provided by residues A393, Y398, and 432-433 (TS). E434 (proton acceptor; for decarboxylase activity) is an active-site residue. UDP-alpha-D-glucuronate-binding positions include R460, N492, 526–535 (KLIDGGKQKR), and Y613. The active-site Proton donor; for decarboxylase activity is the R619.

In the N-terminal section; belongs to the Fmt family. UDP-L-Ara4N formyltransferase subfamily. The protein in the C-terminal section; belongs to the NAD(P)-dependent epimerase/dehydratase family. UDP-glucuronic acid decarboxylase subfamily. In terms of assembly, homohexamer, formed by a dimer of trimers.

The catalysed reaction is UDP-alpha-D-glucuronate + NAD(+) = UDP-beta-L-threo-pentopyranos-4-ulose + CO2 + NADH. It carries out the reaction UDP-4-amino-4-deoxy-beta-L-arabinose + (6R)-10-formyltetrahydrofolate = UDP-4-deoxy-4-formamido-beta-L-arabinose + (6S)-5,6,7,8-tetrahydrofolate + H(+). The protein operates within nucleotide-sugar biosynthesis; UDP-4-deoxy-4-formamido-beta-L-arabinose biosynthesis; UDP-4-deoxy-4-formamido-beta-L-arabinose from UDP-alpha-D-glucuronate: step 1/3. Its pathway is nucleotide-sugar biosynthesis; UDP-4-deoxy-4-formamido-beta-L-arabinose biosynthesis; UDP-4-deoxy-4-formamido-beta-L-arabinose from UDP-alpha-D-glucuronate: step 3/3. It participates in bacterial outer membrane biogenesis; lipopolysaccharide biosynthesis. Its function is as follows. Bifunctional enzyme that catalyzes the oxidative decarboxylation of UDP-glucuronic acid (UDP-GlcUA) to UDP-4-keto-arabinose (UDP-Ara4O) and the addition of a formyl group to UDP-4-amino-4-deoxy-L-arabinose (UDP-L-Ara4N) to form UDP-L-4-formamido-arabinose (UDP-L-Ara4FN). The modified arabinose is attached to lipid A and is required for resistance to polymyxin and cationic antimicrobial peptides. In Escherichia coli (strain SE11), this protein is Bifunctional polymyxin resistance protein ArnA.